Reading from the N-terminus, the 299-residue chain is Dihydroorotate dehydrogenase B (NAD(+)), catalytic subunit (299 aa).

Residues Ser-21 and 44–45 (KS) each bind FMN. Substrate is bound by residues Lys-44, 68–72 (NAVGL), and Asn-125. FMN is bound at residue Asn-125. The active-site Nucleophile is the Cys-128. Lys-163 contributes to the FMN binding site. Residue 189–190 (NT) participates in substrate binding. FMN contacts are provided by residues Gly-214, 240-241 (GG), and 262-263 (GS).

The protein belongs to the dihydroorotate dehydrogenase family. Type 1 subfamily. As to quaternary structure, heterotetramer of 2 PyrK and 2 PyrD type B subunits. FMN serves as cofactor.

The protein localises to the cytoplasm. The catalysed reaction is (S)-dihydroorotate + NAD(+) = orotate + NADH + H(+). The protein operates within pyrimidine metabolism; UMP biosynthesis via de novo pathway; orotate from (S)-dihydroorotate (NAD(+) route): step 1/1. In terms of biological role, catalyzes the conversion of dihydroorotate to orotate with NAD(+) as electron acceptor. The chain is Dihydroorotate dehydrogenase B (NAD(+)), catalytic subunit (pyrD) from Archaeoglobus fulgidus (strain ATCC 49558 / DSM 4304 / JCM 9628 / NBRC 100126 / VC-16).